The primary structure comprises 474 residues: MRLSKTLAGMDMADYSAALDPAYTTLEFENVQVLTMGNDTSPSEGANLNSSNSLGVSALCAICGDRATGKHYGASSCDGCKGFFRRSVRKNHMYSCRFSRQCVVDKDKRNQCRYCRLKKCFRAGMKKEAVQNERDRISTRRSSYEDSSLPSINALLQAEVLSQQITSPISGINGDIRAKKIANITDVCESMKEQLLVLVEWAKYIPAFCELLLDDQVALLRAHAGEHLLLGATKRSMVFKDVLLLGNDYIVPRHCPELAEMSRVSIRILDELVLPFQELQIDDNEYACLKAIIFFDPDAKGLSDPGKIKRLRSQVQVSLEDYINDRQYDSRGRFGELLLLLPTLQSITWQMIEQIQFIKLFGMAKIDNLLQEMLLGGSASDAPHTHHPLHPHLMQEHMGTNVIVANTMPSHLSNGQMCEWPRPRGQAATPETPQPSPPSGSGSESYKLLPGAITTIVKPPSAIPQPTITKQEAI.

The segment at residues 57 to 132 (SALCAICGDR…AGMKKEAVQN (76 aa)) is a DNA-binding region (nuclear receptor). NR C4-type zinc fingers lie at residues 60–80 (CAIC…CDGC) and 96–120 (CRFS…LKKC). Phosphoserine occurs at positions 142 and 143. Tyrosine 144 is modified (phosphotyrosine). Residues 147-377 (SSLPSINALL…NLLQEMLLGG (231 aa)) form the NR LBD domain. Threonine 166 is modified (phosphothreonine). A Phosphoserine modification is found at serine 167. Residues lysine 234 and lysine 307 each participate in a glycyl lysine isopeptide (Lys-Gly) (interchain with G-Cter in ubiquitin) cross-link. Serine 313 is subject to Phosphoserine; by AMPK. A 9aaTAD motif is present at residues 368-376 (NLLQEMLLG). The segment at 413–450 (SNGQMCEWPRPRGQAATPETPQPSPPSGSGSESYKLLP) is disordered. A phosphothreonine mark is found at threonine 429 and threonine 432. Serine 436 bears the Phosphoserine mark. Lysine 458 carries the post-translational modification N6-acetyllysine.

It belongs to the nuclear hormone receptor family. NR2 subfamily. Homodimerization is required for HNF4-alpha to bind to its recognition site. Interacts with CLOCK, BMAL1 and PER1. Interacts with PER2. Interacts with CRY1 and CRY2. Interacts with NR0B2/SHP; the resulting heterodimer is transcriptionally inactive. Interacts with DDX3X; this interaction disrupts the interaction between HNF4 and NR0B2 that forms inactive heterodimers and enhances the formation of active HNF4 homodimers. Post-translationally, phosphorylated on tyrosine residue(s); phosphorylation is important for its DNA-binding activity. Phosphorylation may directly or indirectly play a regulatory role in the subnuclear distribution. Phosphorylation at Ser-313 by AMPK reduces the ability to form homodimers and bind DNA. Acetylation at Lys-458 lowers transcriptional activation by about two-fold. Expressed in the liver, pancreas and colon in a circadian manner.

The protein localises to the nucleus. Functionally, transcriptional regulator which controls the expression of hepatic genes during the transition of endodermal cells to hepatic progenitor cells, facilitatating the recruitment of RNA pol II to the promoters of target genes. Activates the transcription of CYP2C38. Represses the CLOCK-BMAL1 transcriptional activity and is essential for circadian rhythm maintenance and period regulation in the liver and colon cells. The protein is Hepatocyte nuclear factor 4-alpha (Hnf4a) of Mus musculus (Mouse).